A 547-amino-acid chain; its full sequence is CAP-Gly domain-containing linker protein 3 (547 aa).

Residues 1-49 (MTKTDPAPMAPPPRGEEEEEEEEDEPVPEAPSPTQERRQKPVVHPSAPA) form a disordered region. The segment covering 16 to 27 (EEEEEEEEDEPV) has biased composition (acidic residues). ANK repeat units follow at residues 117–155 (TDMTLLHYACKAGAHGVGDPAAAVRLSQQLLALGADVTL), 160–189 (TNMNALHYAAYFDVPDLVRVLLKGARPRVV), and 197–226 (NHGSALHIAASSLCLGAAKCLLEHGANPAL). The region spanning 314–356 (GTTEFASGQWVGVELDEPEGKNDGSVGGVRYFICPPKQGLFAS) is the CAP-Gly 1 domain. The segment at 365–413 (DAPPSSVTSTPRTPRMDFSRVTGKGRREHKGKKKTPSSPSLGSLQQRDR) is disordered. A compositionally biased stretch (low complexity) spans 367 to 377 (PPSSVTSTPRT). Thr374 carries the phosphothreonine modification. Residues 387-399 (GKGRREHKGKKKT) show a composition bias toward basic residues. Residues 400-409 (PSSPSLGSLQ) show a composition bias toward polar residues. Ser401 bears the Phosphoserine mark. Residues 436–478 (GKTDFAPGYWYGIELDQPTGKHDGSVFGVRYFTCPPRHGVFAP) form the CAP-Gly 2 domain. The interval 488 to 547 (STDSPGDSVGAKKVHQVTMTQPKRTFTTVRTPKDIASENSISRLLFCCWFPWMLRAEMQS) is goLD. 2 S-palmitoyl cysteine lipidation sites follow: Cys534 and Cys535.

In terms of assembly, homodimer. Interacts with AKT1 and AKT2; when AKT1 and AKT2 are phosphorylated and activated, affinity is higher for AKT2. Interacts with ZDHHC13 (via ANK repeats). Interacts with ZDHHC17 (via ANK repeats). Post-translationally, palmitoylation by ZDHHC17 regulates association with the plasma membrane.

It is found in the cell membrane. It localises to the cytoplasm. The protein resides in the golgi apparatus. The protein localises to the golgi stack. In terms of biological role, functions as a cytoplasmic linker protein. Involved in TGN-endosome dynamics. May modulate the cellular compartmentalization of AKT kinase family and promote its cell membrane localization, thereby playing a role in glucose transport in adipocytes. The chain is CAP-Gly domain-containing linker protein 3 (CLIP3) from Pongo abelii (Sumatran orangutan).